Reading from the N-terminus, the 320-residue chain is tRNA uridine(34) hydroxylase (320 aa).

Residues 123-217 enclose the Rhodanese domain; the sequence is EDENTVILDA…YGKDPETKGL (95 aa). The Cysteine persulfide intermediate role is filled by Cys-177.

Belongs to the TrhO family.

The enzyme catalyses uridine(34) in tRNA + AH2 + O2 = 5-hydroxyuridine(34) in tRNA + A + H2O. Functionally, catalyzes oxygen-dependent 5-hydroxyuridine (ho5U) modification at position 34 in tRNAs. This Staphylococcus epidermidis (strain ATCC 35984 / DSM 28319 / BCRC 17069 / CCUG 31568 / BM 3577 / RP62A) protein is tRNA uridine(34) hydroxylase.